A 118-amino-acid polypeptide reads, in one-letter code: Large ribosomal subunit protein uL18 (118 aa).

This sequence belongs to the universal ribosomal protein uL18 family. In terms of assembly, part of the 50S ribosomal subunit; part of the 5S rRNA/L5/L18/L25 subcomplex. Contacts the 5S and 23S rRNAs.

Its function is as follows. This is one of the proteins that bind and probably mediate the attachment of the 5S RNA into the large ribosomal subunit, where it forms part of the central protuberance. The sequence is that of Large ribosomal subunit protein uL18 from Cupriavidus pinatubonensis (strain JMP 134 / LMG 1197) (Cupriavidus necator (strain JMP 134)).